The sequence spans 367 residues: Ganglioside-induced differentiation-associated protein 1-like 1 (367 aa).

Residues 45–126 (ESLVLYHWTQ…YVERTFTGEH (82 aa)) form the GST N-terminal domain. The 168-residue stretch at 174–341 (PKYATAEIRR…RLVKRKPPSF (168 aa)) folds into the GST C-terminal domain.

This sequence belongs to the GST superfamily.

The chain is Ganglioside-induced differentiation-associated protein 1-like 1 (GDAP1L1) from Homo sapiens (Human).